Reading from the N-terminus, the 664-residue chain is MAACTLHALSVTLFLLLFFAVSPAKAQQPYVNNHQLACEVRVYDNITNGFTCNGPPSCRSYLTFWSQPPYNTADSIAKLLNVSAAEIQSINNLPTATTRIPTRELVVIPANCSCSSSSGGFYQHNATYNLSGNRGDETYFSVANDTYQALSTCQAMMSQNRYGERQLTPGLNLLVPLRCACPTAKQTTAGFKYLLTYLVAMGDSISGIAEMFNSTSAAITEGNELTSDNIFFFTPVLVPLTTEPTKIVISPSPPPPPVVATPPQTPVDPPGSSSSHKWIYIGIGIGAGLLLLLSILALCFYKRRSKKKSLPSSLPEENKLFDSSTKQSIPTTTTTQWSIDLSNSSEAFGLKSAIESLTLYRFNDLQSATSNFSDENRIKGSVYRATINGDDAAVKVIKGDVSSSEINLLKKLNHSNIIRLSGFCIREGTSYLVFEYSENGSISDWLHSSGKKSLTWKQRVEIARDVAEALDYLHNYITPPHIHKNLESTNILLDSNFRAKIANFGVARILDEGDLDLQLTRHVEGTQGYLAPEYVENGVITSKLDVFAFGVAVLELLSGREAVTIHKKKEGEEEVEMLCKVINSVLGGENVREKLKEFMDPSLGNEYPLELAYTMAQLAKSCVATDLNSRPSVTQVLTTLSMIVSSSIDWEPSDDLLRSGSLGN.

The first 26 residues, 1–26, serve as a signal peptide directing secretion; sequence MAACTLHALSVTLFLLLFFAVSPAKA. At 27-277 the chain is on the extracellular side; that stretch reads QQPYVNNHQL…DPPGSSSSHK (251 aa). 5 N-linked (GlcNAc...) asparagine glycosylation sites follow: N45, N81, N111, N125, and N129. Intrachain disulfides connect C52/C114, C58/C181, and C112/C179. Position 135–141 (135–141) interacts with chitin; that stretch reads GDETYFS. N144 is a glycosylation site (N-linked (GlcNAc...) asparagine). 164 to 170 contributes to the chitin binding site; sequence ERQLTPG. One can recognise a LysM domain in the interval 195–238; sequence LTYLVAMGDSISGIAEMFNSTSAAITEGNELTSDNIFFFTPVLV. The N-linked (GlcNAc...) asparagine glycan is linked to N213. Over residues 251–269 the composition is skewed to pro residues; it reads PSPPPPPVVATPPQTPVDP. The tract at residues 251–270 is disordered; that stretch reads PSPPPPPVVATPPQTPVDPP. A helical transmembrane segment spans residues 278–298; sequence WIYIGIGIGAGLLLLLSILAL. The Cytoplasmic segment spans residues 299 to 664; sequence CFYKRRSKKK…DLLRSGSLGN (366 aa). The region spanning 351–643 is the Protein kinase domain; sequence KSAIESLTLY…TQVLTTLSMI (293 aa). Residues 357 to 365 and K395 each bind ATP; that span reads LTLYRFNDL.

The protein belongs to the protein kinase superfamily. Ser/Thr protein kinase family.

The protein localises to the cell membrane. May recognize microbe-derived N-acetylglucosamine (NAG)-containing ligands. This Arabidopsis thaliana (Mouse-ear cress) protein is Protein LYK5 (LYK5).